Reading from the N-terminus, the 3993-residue chain is MLESYVTPILMSYVNRYIKNLKPSDLQLSLWGGDVVLSKLELKLDVLEQELKLPFTFLSGHIHELRIHVPWTKLGSEPVVITINTMECILKLKDGIQDDHESCGSNSTNRSTAENTKSSIKPRRIQQAAPADPDLPPGYVQSLIRRVVNNVNIVINNLILKYVEDDIVLSVNITSAECYTVGELWDRAFMDISATDLVLRKAINFSDCTVCLDKRNASGKIEFYQDPLLYKCSFRTRLHFTYDNLNSKMPSVIKIHTLVESLKLSITDQQLPMFIRIMQLGIALYYGEIGNFKDGETEDPPCLSKDTLANLTGTEEESRIDMQYPAPYKGQELYSQDYEEPQGWVSWAWSFVPAIVSYDDGEEDDLGTDPASIMHQQKAQTLKDPIVSVGFYCTKATVTFKLTEMQAENSYYSPQKVKSKEVLCWEQEGTTIEALMMGEPFFDCQIGFVGCRAMCLKGILGVKDFEEHMNRSETEACFFICGENLSTKGLTYLTNSLFDYRSPENNGTRAEFILDAAHHKETHTDIAGIQRFGAFYMDYLYTVEHSSGKGPTSQQDFPSGKNEDLGIVQEKSTKSLVIGPLDCRLDSSAVHRVLKMIVCALEHEYEPYSRLKPESKDEKETVLDPEEVSSLEEYIPTRHTSVTLLKCTCTVFMAEFNLLDCLLPVIMGGKNSSNVTNATNFQSLRPLPSIQILVDKINLEHSVPMYAEQLVHVVSSLNQPSDNLLHYCYVHCYLKVFGFQAGLTCLDHSGSYCLPAPIIPSFSTALYGKLLKLPALWTKRSQTVVTEGIFELPNLTIQATRAQTLLLQAIYQSWSHIGNVSSSTVNEALMNEVFPMTGVKSKNPLPTLEGSIQNVELKYCSTSLVKCASGTLGSIKICAKAPGDSGKEKLIPLLQGPSDTRDLHSSKWLNESRKPESLLAPDLIAFTIQVPQYMDYCHHSGAVFLCSVQGLAVNIDPILYTWVIYQPQKRANRHAQQQPVVAVPLVTSVNRRKEDELSIGSAPLGKQQSYQASEYASSPIKTKTVTESRPVSVPVKAVLRVHEECRSPEDKMKEFIAILWNAVKSLTLQLDVQSCCVFIPNDNLPSPSTIVSGDIPGTVRSWYHGQTSIPGTLVLCLPQIKIISAGHKYMEPLQEIPFVIPRPILEEGDAFPWTISLHHFSIYTLLGKQVTLSLVEPMGCTSTLAVTSQKLLPVGPDGRHSFVVCLHVDLESLEIKCSNPQVQLIYELADTMSKVWSKIQKRGNLSPSSVYPETVAGPIPGSPVWSSVGTAPPDTSTCSPSADIGTTTEGDSVQAGDDSPFSDSVTLEQTTSNIGGSSGRVSLWMQWVLPKATVKLFAPDLEKKGTEVCMVSELEDLSASIDVQDVYTKVKCKVESFSIDHYQSRPGEGWQSGHFEGVFLQCKEKPVTTTKLLDGAHQQHGFLSLTYTKAVTKNVRHKLTSRNERRSFYKLSEGLMDGSPHFLHEILLSAQAFDIVVCFPLLNAIASVFHTKLPKTQREKRKSSGQPMRTHTLTSRNLPLIYINTSVIRIFVPQTEETQSTVAVNQAAKEDTMVLKVGSIAMAPQADNPLGRSVLRKDIYQKALNLGILRDPGSEIEDRQYQIDLQSINIGTAQWDQLKPEKGSGSGGVPTESERNSQNPALEWNMASSIQRHQERRAILTPILTDFSVRITGAPAIIFTKIISQENLHMEEILVCGHSLEVNITTNLDFFLSVAQVQLLHQLIVANMTGLEPSTKATEISKQEQKKVDTFDGGTAETSSRYSGAQDSGIGSDSVKIRIVQIEQYSGASQHRIARPSHQSSIVKNLNFIPFDIFITASRISLMTYSSVALPKFKLPEQKEDGKTGRTFLNLAEVDSDVAKPNQACVSMVTAEDPLSSSTSFSSGKKVRVLSLESLHASTRSSARQALGVTVVRQPGRRGTGDLELDLFLHLIVSQPSLLLSCHHRKQRVEVSIFDAMLKGVPSDYTCTDPGKTLPEASDYNIVWLQTVPGETDSKSGIPPSLVTLHIKDFLNGPADIYLDVSKPLKANLSFTKLDQINHFLKKIKKAHSSAHSKETSTPSDSILNMDEPPVPKCYRGKLSKTKVHCDEAQKTSFQENIWRAISCFQKVSVHTTQIVVSMETVPHPHKPCVLASLSNLNGSLTVKAAQKVPGASLGSSFLLSIHDVLLKTSLKERSRILIGPFSATVNLEAKWCKHSGNPGPQQSIPKISMDLRGGLLQVFWGQEHLNCLALLHELFNGYLQEGKSEMPVPESAPQMPSPVEKTQAFKTEQSSDDLRTGIFQYVQDAESLKLPGVYEVLFYNETEESPGMMLWRYPEPRVLTLVRITPVPFNTTEDPDISTADLGDVLQVPCGLEYWDELQKVFVAFQEFSLSESKVCELQLPDINLVHDQKKLVSSDLWRIVLNNNQNTTDDQSSASESGSQSTCEPLVTPTALAACTRVDSCFTPWFVPSLCMSFQFAHLEFRLCHHLDQLGTASPQYLQPFISDKNVPSELEYMIISFREPNLHLRQWNSGPVCQEIKFSSQMDCKLLECRNVTMQTVVKPFGICGQMALSSDGVQKLLDSTVIVDSVLVNFGQHVVHSLNTAIQAWQQNKCPEVEELVFSHFVICNDTQETLRFGQVDTDENILLASLHSHQYSWRSHKSPQLLHICIEGWGNWRWSEPFTVDHAGTFIRTIQYKGRTASLIIKVRALSGVQKQIIICGRQIICSYLSQSIELKVVQHYIGQDGQAVVREHFDCLTAKQKLPSYILENNELTELCVKAKGDEDWSRDVCLEPKASEYSTVIQVPTSNSSIIYVWCTVLTLEPNSQVQQRMIVFSPLFIMRSHLPDPIIIHLEKRSLGLSETQIIPGRGQENPLQNVEPDLVHHLTFQAREEYDPSDCAVPISTALIKQIATKIQPGGTVNEMLDEFYGPEKSQEPTWPYSNKDSDRNEQLSQWDSPMRVKLSIWKPYVRTLLIELLPWALLINQSKWDLWLFEGEKIVLQVPAGKIIIPPNFQEAFQIGIYWENTNTVHKTLAIKLVHNLTSPKWKDGGNGEVVTLDEEAFVDAEIRLGAFPGHQKLCQFCISSMVQHGIQVIQIEDKTTVINNTPYQIVYKPHLAISNSYSGKEHCHVPDSATFSICPGGEHPAVRSSSLPCWDVTPAVGSSELDTATLQKQILLGFSPVPGADSAQCWSLPAIIGGEFPRQSVAVPFGTGRENGFCTRAIALTYQEHLGVTYITLSEDPSPRVVFHNRCPVPMLMKENIRDIPKFDVYCKKIPPESSVHHELYHQIISYPDCKTKDLLPSLFLRIDSMEEMTAEWSDPVDINSQGTQVVFLTGFGYVYVDIAQQCGTVFIILAPEGKAGPIFTSTSRALERMVTFRMFITQLSLAVSDDLTHQAPSELLRLTLDNVFLHVSPVPALLPGEEPPSSFFQLYGVEVYCGDLQLDNQLYNKSNFHFAVLVCQGERTDPAQYSRVQSLLVSSKALEEYKENCFIKLCLTVSEGKDILLDVSEFTFELKPARLYVEDTFVYYIKTLFDTYLPPSRMSGHHAQLFTGQQVLPVQVTQHAKALVNAVKLRKLLIQPVNLLISIHASLKLYIASDHTPLSFSVFERGPVFTTARQLVHALAMHYAAGALFRAGWVVGSLEILGSPASLVRSIGNGISDFFRLPYEGLTRGPGAFVSGVSRGTTSFVKHISKGALTSITNLATSLARNMGRLSLDEEHYNRQEEWRRQLPESLGEGLRQGLSRLGISLLGAIAGIVDQPMQNFQKTSETQASAGHKAKGVISGVGKGIMGVFTKPIGGAAELVSQTGYGILHGAGLSQLPKQRCQPTHLYADQAPNSHVKYVWKMLQSLGRPEVHMALDVVLVRGSGQEHEGCLLLTSEVLFVVSISEDTQQQAFPITEISCAQDTKQNNLLTVQLKQPRVASDVEIDGARERLSEQQFKRLVDYIAKTSCHLAPSCSSMQTCSVVAVEPPPATVKTYHYLVDPHFAQVFISKFTMVKNKALRKGFS.

The region spanning 2–102 is the Chorein N-terminal domain; sequence LESYVTPILM…KDGIQDDHES (101 aa). The interval 100-133 is disordered; the sequence is HESCGSNSTNRSTAENTKSSIKPRRIQQAAPADP. A compositionally biased stretch (polar residues) spans 103–119; it reads CGSNSTNRSTAENTKSS. Ser413, Ser998, Ser1001, and Ser1032 each carry phosphoserine. Disordered stretches follow at residues 1262 to 1303, 1616 to 1637, and 1735 to 1770; these read SPVW…PFSD, DQLK…ERNS, and TKAT…DSGI. Over residues 1264-1291 the composition is skewed to polar residues; sequence VWSSVGTAPPDTSTCSPSADIGTTTEGD. The segment covering 1739–1750 has biased composition (basic and acidic residues); sequence EISKQEQKKVDT. Positions 1756-1770 are enriched in polar residues; that stretch reads AETSSRYSGAQDSGI. Ser1789 is modified (phosphoserine). The interval 2048 to 2067 is disordered; sequence HSSAHSKETSTPSDSILNMD. Positions 2604–2683 constitute an SHR-BD domain; the sequence is HFVICNDTQE…TIQYKGRTAS (80 aa). Positions 3880–3993 are localizes the protein to the Golgi apparatus; the sequence is AFPITEISCA…KNKALRKGFS (114 aa).

Belongs to the VPS13 family. Interacts with STX6. Interacts with STX12 (via N-terminus). Interacts with RAB6A isoform 1 (GTP-bound) and isoform 2 (GTP-bound). Interacts with RAB6B (GTP-bound). In terms of tissue distribution, ubiquitously expressed in all examined tissues.

It localises to the recycling endosome membrane. The protein resides in the cytoplasmic vesicle. It is found in the secretory vesicle. Its subcellular location is the acrosome membrane. The protein localises to the golgi apparatus. It localises to the cis-Golgi network membrane. The protein resides in the endoplasmic reticulum-Golgi intermediate compartment membrane. It is found in the trans-Golgi network membrane. Its subcellular location is the early endosome membrane. The protein localises to the lysosome membrane. Its function is as follows. Mediates the transfer of lipids between membranes at organelle contact sites. Binds phosphatidylinositol 3-phosphate. Functions as a tethering factor in the slow endocytic recycling pathway, to assist traffic between early and recycling endosomes. Involved in the transport of proacrosomal vesicles to the nuclear dense lamina (NDL) during spermatid development. Plays a role in the assembly of the Golgi apparatus, possibly by mediating trafficking to the Golgi membrane. Plays a role in the development of the nervous system, and may be required for neuron projection development. May also play a role during adipose tissue development. Required for maintenance of the ocular lens. Required for proper organization of the Golgi. In Mus musculus (Mouse), this protein is Intermembrane lipid transfer protein VPS13B.